Consider the following 447-residue polypeptide: Na(+)-translocating NADH-quinone reductase subunit A (447 aa).

Belongs to the NqrA family. As to quaternary structure, composed of six subunits; NqrA, NqrB, NqrC, NqrD, NqrE and NqrF.

It catalyses the reaction a ubiquinone + n Na(+)(in) + NADH + H(+) = a ubiquinol + n Na(+)(out) + NAD(+). In terms of biological role, NQR complex catalyzes the reduction of ubiquinone-1 to ubiquinol by two successive reactions, coupled with the transport of Na(+) ions from the cytoplasm to the periplasm. NqrA to NqrE are probably involved in the second step, the conversion of ubisemiquinone to ubiquinol. The polypeptide is Na(+)-translocating NADH-quinone reductase subunit A (Neisseria gonorrhoeae (strain NCCP11945)).